A 111-amino-acid chain; its full sequence is MLLLLLLLGPGSGLGAVVSQHPSRVICKSGTSVKIECRSLDFQATTMFWYRQFPKQSLMLMATSNEGSKATYEQGVEKDKFLINHASLTLSTLTVTSAHPEDSSFYICSAR.

A signal peptide spans 1 to 15 (MLLLLLLLGPGSGLG). The region spanning 16–111 (AVVSQHPSRV…DSSFYICSAR (96 aa)) is the Ig-like domain. A disulfide bond links C37 and C108.

As to quaternary structure, alpha-beta TR is a heterodimer composed of an alpha and beta chain; disulfide-linked. The alpha-beta TR is associated with the transmembrane signaling CD3 coreceptor proteins to form the TR-CD3 (TcR or TCR). The assembly of alpha-beta TR heterodimers with CD3 occurs in the endoplasmic reticulum where a single alpha-beta TR heterodimer associates with one CD3D-CD3E heterodimer, one CD3G-CD3E heterodimer and one CD247 homodimer forming a stable octameric structure. CD3D-CD3E and CD3G-CD3E heterodimers preferentially associate with TR alpha and TR beta chains, respectively. The association of the CD247 homodimer is the last step of TcR assembly in the endoplasmic reticulum and is required for transport to the cell surface.

It localises to the cell membrane. Functionally, v region of the variable domain of T cell receptor (TR) beta chain that participates in the antigen recognition. Alpha-beta T cell receptors are antigen specific receptors which are essential to the immune response and are present on the cell surface of T lymphocytes. Recognize peptide-major histocompatibility (MH) (pMH) complexes that are displayed by antigen presenting cells (APC), a prerequisite for efficient T cell adaptive immunity against pathogens. Binding of alpha-beta TR to pMH complex initiates TR-CD3 clustering on the cell surface and intracellular activation of LCK that phosphorylates the ITAM motifs of CD3G, CD3D, CD3E and CD247 enabling the recruitment of ZAP70. In turn ZAP70 phosphorylates LAT, which recruits numerous signaling molecules to form the LAT signalosome. The LAT signalosome propagates signal branching to three major signaling pathways, the calcium, the mitogen-activated protein kinase (MAPK) kinase and the nuclear factor NF-kappa-B (NF-kB) pathways, leading to the mobilization of transcription factors that are critical for gene expression and essential for T cell growth and differentiation. The T cell repertoire is generated in the thymus, by V-(D)-J rearrangement. This repertoire is then shaped by intrathymic selection events to generate a peripheral T cell pool of self-MH restricted, non-autoaggressive T cells. Post-thymic interaction of alpha-beta TR with the pMH complexes shapes TR structural and functional avidity. In Homo sapiens (Human), this protein is T cell receptor beta variable 20-1.